A 371-amino-acid chain; its full sequence is 4-hydroxy-3-methylbut-2-en-1-yl diphosphate synthase (flavodoxin) (371 aa).

Residues Cys272, Cys275, Cys307, and Glu314 each coordinate [4Fe-4S] cluster.

This sequence belongs to the IspG family. [4Fe-4S] cluster is required as a cofactor.

It catalyses the reaction (2E)-4-hydroxy-3-methylbut-2-enyl diphosphate + oxidized [flavodoxin] + H2O + 2 H(+) = 2-C-methyl-D-erythritol 2,4-cyclic diphosphate + reduced [flavodoxin]. Its pathway is isoprenoid biosynthesis; isopentenyl diphosphate biosynthesis via DXP pathway; isopentenyl diphosphate from 1-deoxy-D-xylulose 5-phosphate: step 5/6. In terms of biological role, converts 2C-methyl-D-erythritol 2,4-cyclodiphosphate (ME-2,4cPP) into 1-hydroxy-2-methyl-2-(E)-butenyl 4-diphosphate. This is 4-hydroxy-3-methylbut-2-en-1-yl diphosphate synthase (flavodoxin) from Magnetococcus marinus (strain ATCC BAA-1437 / JCM 17883 / MC-1).